The following is a 178-amino-acid chain: PRA1 family protein 2 (178 aa).

At 1–41 (MSEVRLPPLRALDDFVLGSARLVAPDPCDPQRWCHRVINNL) the chain is on the cytoplasmic side. A helical transmembrane segment spans residues 42-62 (LYYQTNYLICFGLGLALAGYV). Residues 63-64 (RP) are Extracellular-facing. The helical transmembrane segment at 65–85 (LHTLLSALVVAVALGMLVCAA) threads the bilayer. Residues 86–96 (ENRAAVRRCRR) are Cytoplasmic-facing. A helical transmembrane segment spans residues 97–119 (SHPAACLAAVLAVGFLVLWAAGG). The Extracellular segment spans residues 120–122 (AGT). A helical transmembrane segment spans residues 123–140 (FLLSIAGPVLLILVHASL). Over 141-178 (RLRNLKNKIENKIESIGLKRTPMGLLLEALGQEQEAGS) the chain is Cytoplasmic.

It belongs to the PRA1 family. In terms of assembly, interacts with CCR5 and GDE1.

The protein localises to the endosome membrane. In terms of biological role, may be involved in ER/Golgi transport and vesicular traffic. Plays a proapoptotic role in cerulenin-induced neuroblastoma apoptosis. The sequence is that of PRA1 family protein 2 (PRAF2) from Bos taurus (Bovine).